We begin with the raw amino-acid sequence, 59 residues long: Large ribosomal subunit protein uL30 (59 aa).

The protein belongs to the universal ribosomal protein uL30 family. In terms of assembly, part of the 50S ribosomal subunit.

This is Large ribosomal subunit protein uL30 from Sodalis glossinidius (strain morsitans).